Here is a 546-residue protein sequence, read N- to C-terminus: Membrane protein insertase YidC (546 aa).

The chain crosses the membrane as a helical span at residues 8-28 (ILLATVLSVGILILWQVIFPT). The tract at residues 31-70 (APPKPAHPPAAEVAKPAAPASPAPGAAAPAVPAPPPDAPE) is disordered. The segment covering 39–60 (PAAEVAKPAAPASPAPGAAAPA) has biased composition (low complexity). The next 5 helical transmembrane spans lie at 326–346 (IDYG…LYVM), 356–376 (WGVA…PLTY), 422–442 (LGGC…YAAL), 459–479 (LTAH…SFVM), and 498–518 (FFPG…TLYI).

This sequence belongs to the OXA1/ALB3/YidC family. Type 1 subfamily. In terms of assembly, interacts with the Sec translocase complex via SecD. Specifically interacts with transmembrane segments of nascent integral membrane proteins during membrane integration.

Its subcellular location is the cell inner membrane. Required for the insertion and/or proper folding and/or complex formation of integral membrane proteins into the membrane. Involved in integration of membrane proteins that insert both dependently and independently of the Sec translocase complex, as well as at least some lipoproteins. Aids folding of multispanning membrane proteins. The sequence is that of Membrane protein insertase YidC from Anaeromyxobacter dehalogenans (strain 2CP-1 / ATCC BAA-258).